A 414-amino-acid chain; its full sequence is Cyclohex-1-ene-1-carbonyl-CoA dehydrogenase (414 aa).

The Proton acceptor role is filled by D124. FAD contacts are provided by A157, T158, S164, and T190. S164 lines the cyclohex-1-ene-1-carbonyl-CoA pocket. A cyclohexa-1,5-diene-1-carbonyl-CoA-binding site is contributed by S164. Residues K211, R275, and T396 each coordinate cyclohex-1-ene-1-carbonyl-CoA. The cyclohexa-1,5-diene-1-carbonyl-CoA site is built by K211, R275, and T396. T398 and Q400 together coordinate FAD. Position 408 (R408) interacts with cyclohex-1-ene-1-carbonyl-CoA. R408 provides a ligand contact to cyclohexa-1,5-diene-1-carbonyl-CoA.

This sequence belongs to the acyl-CoA dehydrogenase family. As to quaternary structure, homotetramer. FAD serves as cofactor.

The catalysed reaction is cyclohex-1-ene-1-carbonyl-CoA + oxidized [electron-transfer flavoprotein] + H(+) = cyclohexa-1,5-diene-1-carbonyl-CoA + reduced [electron-transfer flavoprotein]. Its function is as follows. Mediates the conversion of cyclohex-1-ene-1-carbonyl-CoA (Ch1CoA) into (E)-2-cyclohex-1,5-diene-1-carbonyl-CoA in biosynthesis of cyclohexane-1-carboxylate, a by-product produced during fermentation of benzoate and crotonate to acetate. Also able to further convert (E)-2-cyclohex-1,5-diene-1-carbonyl-CoA to benzoyl-CoA. In Syntrophus aciditrophicus (strain SB), this protein is Cyclohex-1-ene-1-carbonyl-CoA dehydrogenase.